The sequence spans 158 residues: COP9 signalosome complex subunit 9 (158 aa).

One can recognise a PCI domain in the interval 5–119 (LLRNLIEDKT…SVARRATVLE (115 aa)).

In terms of assembly, component of a COP9 signalosome-like (CSN) complex.

It is found in the cytoplasm. The protein localises to the nucleus. In terms of biological role, component of the COP9 signalosome (CSN) complex that acts as a regulator of the ubiquitin (Ubl) conjugation pathway by mediating the deneddylation of the cullin subunit of SCF-type E3 ubiquitin-protein ligase complexes. The complex is involved in the regulation of the mating pheromone response. This chain is COP9 signalosome complex subunit 9 (CSN9), found in Kluyveromyces lactis (strain ATCC 8585 / CBS 2359 / DSM 70799 / NBRC 1267 / NRRL Y-1140 / WM37) (Yeast).